The following is a 460-amino-acid chain: MSQYETPLFTALVEHSKRNPIQFHIPGHKKGQGMDPTFREFIGHNALAIDLINIAPLDDLHHPKGMIKEAQDLAAAAFGADHTFFSIQGTSGAIMTMVMSVCGPGDKILVPRNVHKSVMSAIIFSGAKPIFMHPEIDPKLGISHGITIQSVKKALEEHSDAKGLLVINPTYFGFAADLEQIVQLAHSYDIPVLVDEAHGVHIHFHDELPMSAMQAGADMAATSVHKLGGSLTQSSILNVKEGLVNVKHVQSIISMLTTTSTSYILLASLDVARKRLATEGTALIEQTIQLAEHVRDAINSIEHLYCPGKEMLGTDATFNYDPTKIIVSVKDLGITGHQAEVWLREQYNIEVELSDLYNILCLITLGDTESDTNTLIAALQDLAATFRNRADKGVQVQVEIPEIPVLALSPRDAFYSETEVIPFENAAGRIIADFVMVYPPGIPIFTPGGNYYTRKLRVYS.

An N6-(pyridoxal phosphate)lysine modification is found at lysine 226.

It belongs to the Orn/Lys/Arg decarboxylase class-I family. It depends on pyridoxal 5'-phosphate as a cofactor.

Its subcellular location is the cytoplasm. The catalysed reaction is L-arginine + H(+) = agmatine + CO2. The protein operates within amine and polyamine biosynthesis; agmatine biosynthesis; agmatine from L-arginine: step 1/1. Functionally, catalyzes the formation of agmatine from arginine. The chain is Arginine decarboxylase (speA) from Bacillus cereus (strain ATCC 14579 / DSM 31 / CCUG 7414 / JCM 2152 / NBRC 15305 / NCIMB 9373 / NCTC 2599 / NRRL B-3711).